Consider the following 972-residue polypeptide: 116 kDa U5 small nuclear ribonucleoprotein component (972 aa).

Position 1 is an N-acetylmethionine (M1). The tract at residues 1–54 (MDTDLYDEFGNYIGPELDSDEDDDELGRETKDLDEMDDDDDDDDIGDHDDDHPG) is disordered. Composition is skewed to acidic residues over residues 17 to 26 (LDSDEDDDEL) and 34 to 48 (DEMDDDDDDDDIGDH). S19 is modified (phosphoserine). A Glycyl lysine isopeptide (Lys-Gly) (interchain with G-Cter in SUMO1); alternate cross-link involves residue K64. K64 participates in a covalent cross-link: Glycyl lysine isopeptide (Lys-Gly) (interchain with G-Cter in SUMO2); alternate. T86 is modified (phosphothreonine). In terms of domain architecture, tr-type G spans 127–409 (ELIRNVTLCG…GIHLTKEELK (283 aa)). GTP-binding positions include 136 to 143 (GHLHHGKT), 204 to 208 (DTPGH), and 258 to 261 (NKID).

It belongs to the TRAFAC class translation factor GTPase superfamily. Classic translation factor GTPase family. EF-G/EF-2 subfamily. In terms of assembly, component of the U5 snRNP and the U4/U6-U5 tri-snRNP complex, a building block of the spliceosome. The U4/U6-U5 tri-snRNP complex is composed of the U4, U6 and U5 snRNAs and at least PRPF3, PRPF4, PRPF6, PRPF8, PRPF31, SNRNP200, TXNL4A, SNRNP40, DDX23, CD2BP2, PPIH, SNU13, EFTUD2, SART1 and USP39. Component of the pre-catalytic, catalytic and post-catalytic spliceosome complexes. Component of the minor spliceosome, which splices U12-type introns. Within this complex, interacts with CRIPT. Interacts with ERBB4 and PRPF8. Interacts with PIH1D1. Interacts with RPAP3 and URI1 in a ZNHIT2-dependent manner. Interacts with NRDE2. Interacts with FAM50A. Interacts with UBL5.

It is found in the nucleus. Its function is as follows. Required for pre-mRNA splicing as component of the spliceosome, including pre-catalytic, catalytic and post-catalytic spliceosomal complexes. Component of the U5 snRNP and the U4/U6-U5 tri-snRNP complex, a building block of the spliceosome. As a component of the minor spliceosome, involved in the splicing of U12-type introns in pre-mRNAs. The polypeptide is 116 kDa U5 small nuclear ribonucleoprotein component (EFTUD2) (Pongo abelii (Sumatran orangutan)).